Reading from the N-terminus, the 292-residue chain is 33 kDa chaperonin (292 aa).

2 disulfides stabilise this stretch: cysteine 237/cysteine 239 and cysteine 270/cysteine 273.

Belongs to the HSP33 family. In terms of processing, under oxidizing conditions two disulfide bonds are formed involving the reactive cysteines. Under reducing conditions zinc is bound to the reactive cysteines and the protein is inactive.

It is found in the cytoplasm. Redox regulated molecular chaperone. Protects both thermally unfolding and oxidatively damaged proteins from irreversible aggregation. Plays an important role in the bacterial defense system toward oxidative stress. This is 33 kDa chaperonin from Lachnoclostridium phytofermentans (strain ATCC 700394 / DSM 18823 / ISDg) (Clostridium phytofermentans).